The sequence spans 529 residues: Mobilization protein A (529 aa).

A disordered region spans residues 311 to 356 (GKHSAGAGGGVRAAGGPEKGREGADHQAGERGRPERPADGQRHRRG). The span at 328–356 (EKGREGADHQAGERGRPERPADGQRHRRG) shows a compositional bias: basic and acidic residues.

This protein is essential to promote the specific transfer of the plasmid in the presence of conjugative plasmids. This is Mobilization protein A (mobA) from Escherichia coli.